The primary structure comprises 295 residues: Peptide transport system permease protein SapC (295 aa).

A run of 6 helical transmembrane segments spans residues Ile-27 to Tyr-47, Leu-102 to Leu-122, Phe-129 to Ile-149, Leu-157 to Tyr-177, Val-219 to Gly-239, and Pro-262 to Phe-282. In terms of domain architecture, ABC transmembrane type-1 spans Leu-98–Leu-278.

The protein belongs to the binding-protein-dependent transport system permease family. OppBC subfamily.

It localises to the cell inner membrane. Involved in a peptide intake transport system that plays a role in the resistance to antimicrobial peptides. In Haemophilus influenzae (strain ATCC 51907 / DSM 11121 / KW20 / Rd), this protein is Peptide transport system permease protein SapC (sapC).